Reading from the N-terminus, the 40-residue chain is Peroxisomal LYS1 stabilizing protein 1 (40 aa).

Residues 1–10 are compositionally biased toward polar residues; it reads MTAKTKQSWN. Positions 1–20 are disordered; that stretch reads MTAKTKQSWNKGIWENGKQG.

Its subcellular location is the cytoplasm. It localises to the cytosol. The protein resides in the peroxisome matrix. Modulates the lysine biosynthesis pathway, possibly by stabilizing the lysine biosynthesis LYS1 protein in lysine-deplete conditions. This is Peroxisomal LYS1 stabilizing protein 1 from Saccharomyces cerevisiae (strain ATCC 204508 / S288c) (Baker's yeast).